We begin with the raw amino-acid sequence, 197 residues long: Peptidyl-tRNA hydrolase (197 aa).

Tyr18 is a tRNA binding site. His23 serves as the catalytic Proton acceptor. Tyr68, Asn70, and Asn116 together coordinate tRNA.

Belongs to the PTH family. As to quaternary structure, monomer.

It is found in the cytoplasm. The catalysed reaction is an N-acyl-L-alpha-aminoacyl-tRNA + H2O = an N-acyl-L-amino acid + a tRNA + H(+). Hydrolyzes ribosome-free peptidyl-tRNAs (with 1 or more amino acids incorporated), which drop off the ribosome during protein synthesis, or as a result of ribosome stalling. Its function is as follows. Catalyzes the release of premature peptidyl moieties from peptidyl-tRNA molecules trapped in stalled 50S ribosomal subunits, and thus maintains levels of free tRNAs and 50S ribosomes. The chain is Peptidyl-tRNA hydrolase from Desulfotalea psychrophila (strain LSv54 / DSM 12343).